A 657-amino-acid polypeptide reads, in one-letter code: Pyoverdine export ATP-binding/permease protein PvdT (657 aa).

The ABC transporter domain occupies 6-245; that stretch reads IDLRNIRKSY…LSANAGALQA (240 aa). An ATP-binding site is contributed by 43–50; it reads GASGSGKS. Helical transmembrane passes span 285–305, 532–552, 590–610, and 620–640; these read ALTL…LAVG, LSLM…IGVM, LSVV…GILI, and LAAV…FGFM.

Belongs to the ABC transporter superfamily. Macrolide exporter (TC 3.A.1.122) family. As to quaternary structure, part of the tripartite efflux system PvdRT-OpmQ, which is composed of an inner membrane component with both ATPase and permease domains, PvdT, a periplasmic membrane fusion protein, PvdR, and an outer membrane component, OpmQ.

It is found in the cell inner membrane. Functionally, part of the tripartite efflux system PvdRT-OpmQ required for the secretion into the extracellular milieu of the siderophore pyoverdine (PVD), which is involved in iron acquisition. This subunit binds PVD and drives its secretion by hydrolyzing ATP. The system is responsible for export of newly synthesized PVD after the final steps of biosynthesis have taken place in the periplasm. It is also responsible for recycling of PVD after internalization of ferri-PVD into the periplasm by the outer-membrane receptor FpvA and release of iron from PVD, thus making PVD available for new cycles of iron uptake. The sequence is that of Pyoverdine export ATP-binding/permease protein PvdT from Pseudomonas fluorescens (strain ATCC BAA-477 / NRRL B-23932 / Pf-5).